The primary structure comprises 46 residues: Light-harvesting protein B800/850/890 alpha-1 chain (46 aa).

Topologically, residues 1–12 (MWRLWKLYDPRR) are cytoplasmic. The chain crosses the membrane as a helical span at residues 13–33 (VLIGIFSWLAVLALVIHFILL). Histidine 29 contacts a bacteriochlorophyll. The Periplasmic portion of the chain corresponds to 34-46 (STDRFNWVGGAAN).

The protein belongs to the antenna complex alpha subunit family. As to quaternary structure, the core complex is formed by different alpha and beta chains, binding bacteriochlorophyll molecules, and arranged most probably in tetrameric structures disposed around the reaction center. The non-pigmented gamma chains may constitute additional components.

It is found in the cell inner membrane. Its function is as follows. Antenna complexes are light-harvesting systems, which transfer the excitation energy to the reaction centers. The protein is Light-harvesting protein B800/850/890 alpha-1 chain of Halorhodospira halophila (strain DSM 244 / SL1) (Ectothiorhodospira halophila (strain DSM 244 / SL1)).